Consider the following 308-residue polypeptide: Ribosomal RNA large subunit methyltransferase F (308 aa).

Belongs to the methyltransferase superfamily. METTL16/RlmF family.

The protein localises to the cytoplasm. It carries out the reaction adenosine(1618) in 23S rRNA + S-adenosyl-L-methionine = N(6)-methyladenosine(1618) in 23S rRNA + S-adenosyl-L-homocysteine + H(+). In terms of biological role, specifically methylates the adenine in position 1618 of 23S rRNA. This Salmonella arizonae (strain ATCC BAA-731 / CDC346-86 / RSK2980) protein is Ribosomal RNA large subunit methyltransferase F.